The primary structure comprises 441 residues: Arginine biosynthesis bifunctional protein ArgJ, mitochondrial (441 aa).

The substrate site is built by Thr-177, Lys-204, Thr-215, Glu-301, Asn-436, and Ser-441. Thr-215 serves as the catalytic Nucleophile.

This sequence belongs to the ArgJ family. As to quaternary structure, heterodimer of an alpha and a beta chain. The alpha and beta chains are autoproteolytically processed from a single precursor protein within the mitochondrion.

The protein resides in the mitochondrion matrix. The catalysed reaction is N(2)-acetyl-L-ornithine + L-glutamate = N-acetyl-L-glutamate + L-ornithine. It catalyses the reaction L-glutamate + acetyl-CoA = N-acetyl-L-glutamate + CoA + H(+). It participates in amino-acid biosynthesis; L-arginine biosynthesis; L-ornithine and N-acetyl-L-glutamate from L-glutamate and N(2)-acetyl-L-ornithine (cyclic): step 1/1. Its pathway is amino-acid biosynthesis; L-arginine biosynthesis; N(2)-acetyl-L-ornithine from L-glutamate: step 1/4. Catalyzes two activities which are involved in the cyclic version of arginine biosynthesis: the synthesis of acetylglutamate from glutamate and acetyl-CoA, and of ornithine by transacetylation between acetylornithine and glutamate. The polypeptide is Arginine biosynthesis bifunctional protein ArgJ, mitochondrial (Lachancea thermotolerans (strain ATCC 56472 / CBS 6340 / NRRL Y-8284) (Yeast)).